A 614-amino-acid polypeptide reads, in one-letter code: Glutamine--fructose-6-phosphate aminotransferase [isomerizing] (614 aa).

Cys-2 (nucleophile; for GATase activity) is an active-site residue. Residues 2-223 (CGIIGYIGRR…DGEMAVVTRD (222 aa)) enclose the Glutamine amidotransferase type-2 domain. SIS domains follow at residues 292–431 (YLDR…GRTI) and 463–604 (IAVK…VDRP). The active-site For Fru-6P isomerization activity is the Lys-609.

As to quaternary structure, homodimer.

The protein resides in the cytoplasm. It catalyses the reaction D-fructose 6-phosphate + L-glutamine = D-glucosamine 6-phosphate + L-glutamate. Catalyzes the first step in hexosamine metabolism, converting fructose-6P into glucosamine-6P using glutamine as a nitrogen source. The protein is Glutamine--fructose-6-phosphate aminotransferase [isomerizing] of Chlorobaculum tepidum (strain ATCC 49652 / DSM 12025 / NBRC 103806 / TLS) (Chlorobium tepidum).